Consider the following 254-residue polypeptide: 3-deoxy-manno-octulosonate cytidylyltransferase (254 aa).

This sequence belongs to the KdsB family.

The protein localises to the cytoplasm. The enzyme catalyses 3-deoxy-alpha-D-manno-oct-2-ulosonate + CTP = CMP-3-deoxy-beta-D-manno-octulosonate + diphosphate. It participates in nucleotide-sugar biosynthesis; CMP-3-deoxy-D-manno-octulosonate biosynthesis; CMP-3-deoxy-D-manno-octulosonate from 3-deoxy-D-manno-octulosonate and CTP: step 1/1. The protein operates within bacterial outer membrane biogenesis; lipopolysaccharide biosynthesis. Activates KDO (a required 8-carbon sugar) for incorporation into bacterial lipopolysaccharide in Gram-negative bacteria. This is 3-deoxy-manno-octulosonate cytidylyltransferase from Chlamydia caviae (strain ATCC VR-813 / DSM 19441 / 03DC25 / GPIC) (Chlamydophila caviae).